A 689-amino-acid polypeptide reads, in one-letter code: Glycine--tRNA ligase beta subunit (689 aa).

It belongs to the class-II aminoacyl-tRNA synthetase family. In terms of assembly, tetramer of two alpha and two beta subunits.

It localises to the cytoplasm. It catalyses the reaction tRNA(Gly) + glycine + ATP = glycyl-tRNA(Gly) + AMP + diphosphate. This is Glycine--tRNA ligase beta subunit from Desulforapulum autotrophicum (strain ATCC 43914 / DSM 3382 / VKM B-1955 / HRM2) (Desulfobacterium autotrophicum).